The chain runs to 655 residues: Endoplasmic reticulum chaperone BiP (655 aa).

The signal sequence occupies residues Met-1–Ala-19. The tract at residues Met-1–Ala-81 is required for interaction with ELAPOR1. Gly-37–Tyr-40 serves as a coordination point for ATP. Ser-87 carries the phosphoserine modification. Lys-97 is a binding site for ATP. Lys-126 is modified (N6-acetyllysine). The nucleotide-binding (NBD) stretch occupies residues Lys-126–Lys-281. Tyr-161 carries the post-translational modification 3'-nitrotyrosine. Lys-214 is modified (N6-acetyllysine). Residue Gly-228–Thr-230 coordinates ATP. An N6-acetyllysine modification is found at Lys-272. An ATP-binding site is contributed by Glu-294–Ser-301. Lys-327 carries the N6-acetyllysine modification. Lys-353 is covalently cross-linked (Glycyl lysine isopeptide (Lys-Gly) (interchain with G-Cter in SUMO2)). Lys-354 is subject to N6-acetyllysine; alternate. Lys-354 participates in a covalent cross-link: Glycyl lysine isopeptide (Lys-Gly) (interchain with G-Cter in SUMO1); alternate. Residue Gly-365–Arg-368 coordinates ATP. An interdomain linker region spans residues Gln-410–Val-420. The substrate-binding (SBD) stretch occupies residues Cys-421–Thr-501. Residue Lys-448 is modified to N6-succinyllysine. Omega-N-methylarginine is present on Arg-493. Thr-519 is modified (O-AMP-threonine; alternate). At Thr-519 the chain carries Phosphothreonine; alternate. Lys-586 is subject to N6,N6,N6-trimethyllysine; by METTL21A; in vitro. Residue Lys-586 is modified to N6,N6-dimethyllysine; alternate. Lys-586 is modified (N6-methyllysine; alternate). At Lys-592 the chain carries N6-methyllysine. The tract at residues Ile-632–Leu-655 is disordered. A phosphothreonine mark is found at Thr-644 and Thr-649. A compositionally biased stretch (acidic residues) spans Gly-645–Leu-655. The residue at position 650 (Ser-650) is a Phosphoserine. Positions Lys-652–Leu-655 match the Prevents secretion from ER motif.

The protein belongs to the heat shock protein 70 family. Monomer and homooligomer; homooligomerization via the interdomain linker inactivates the chaperone activity and acts as a storage of HSPA5/BiP molecules. Interacts with DNAJC1 (via J domain). Component of an EIF2 complex at least composed of CELF1/CUGBP1, CALR, CALR3, EIF2S1, EIF2S2, HSP90B1 and HSPA5. Part of a large chaperone multiprotein complex comprising DNAJB11, HSP90B1, HSPA5, HYOU, PDIA2, PDIA4, PDIA6, PPIB, SDF2L1, UGGT1 and very small amounts of ERP29, but not, or at very low levels, CALR nor CANX. Interacts with TMEM132A and TRIM21. May form a complex with ERLEC1, OS9, SEL1L and SYVN1. Interacts with DNAJC10. Interacts with DNAJB9/ERdj4; leading to recruit HSPA5/BiP to ERN1/IRE1. Interacts with ERN1/IRE1 (via luminal domain); the interaction takes place following interaction with DNAJB9/ERdj4 and leads to inactivate ERN1/IRE1, the interaction also competitively inhibits ERN1 interaction with MANF. Interacts directly with MANF (via SAP domain); the interaction inhibits ATP binding to HSPA5/BiP and subsequent nucleotide exchange. Interacts with ERN1 (via luminal domain); the interaction competitively inhibits ERN1 interaction with MANF. Interacts with EIF2AK3/PERK (via luminal domain); interaction leads to inactivate EIF2AK3/PERK. Interacts with MX1. Interacts with METTL23. Interacts with CEMIP; the interaction induces calcium leakage from the endoplasmic reticulum and cell migration. Interacts with PCSK4 form; the interaction takes place in the endoplasmic reticulum. Interacts with CIPC. Interacts with CCDC88B (via C-terminus); the interaction opposes ERN1-mediated JNK activation, protecting against apoptosis. Interacts with INPP5K; necessary for INPP5K localization at the endoplasmic reticulum. Interacts with MANF; the interaction is direct. Interacts with LOXL2; leading to activate the ERN1/IRE1-XBP1 pathway of the unfolded protein response. Interacts with CLU under stressed condition; interaction increases CLU protein stability; facilitates its retrotranslocation and redistribution to the mitochondria; cooperatively suppress stress-induced apoptosis by stabilizing mitochondrial membrane integrity. Interacts with CCDC47. Interacts with CLN3. Interacts with ELAPOR1; may regulate the function of HSPA5 in apoptosis and cell proliferation. Interacts with CASP7. Interacts with ILDR2; the interaction stabilizes ILDR2 expression. Interacts with ADAM7. In unstressed cells, AMPylation at Thr-519 by FICD inactivates the chaperome activity: AMPylated form is locked in a relatively inert state and only weakly stimulated by J domain-containing proteins. In response to endoplasmic reticulum stress, de-AMPylation by the same protein, FICD, restores the chaperone activity. In terms of tissue distribution, expressed in sperm (at protein level).

The protein resides in the endoplasmic reticulum lumen. Its subcellular location is the melanosome. The protein localises to the cytoplasm. It localises to the cell surface. The catalysed reaction is ATP + H2O = ADP + phosphate + H(+). With respect to regulation, the chaperone activity is regulated by ATP-induced allosteric coupling of the nucleotide-binding (NBD) and substrate-binding (SBD) domains. In the ADP-bound and nucleotide-free (apo) states, the two domains have little interaction. In contrast, in the ATP-bound state the two domains are tightly coupled, which results in drastically accelerated kinetics in both binding and release of polypeptide substrates. J domain-containing co-chaperones (DNAJB9/ERdj4 or DNAJC10/ERdj5) stimulate the ATPase activity and are required for efficient substrate recognition by HSPA5/BiP. Homooligomerization inactivates participating HSPA5/BiP protomers and probably act as reservoirs to store HSPA5/BiP molecules when they are not needed by the cell. Endoplasmic reticulum chaperone that plays a key role in protein folding and quality control in the endoplasmic reticulum lumen. Involved in the correct folding of proteins and degradation of misfolded proteins via its interaction with DNAJC10/ERdj5, probably to facilitate the release of DNAJC10/ERdj5 from its substrate. Acts as a key repressor of the EIF2AK3/PERK and ERN1/IRE1-mediated unfolded protein response (UPR). In the unstressed endoplasmic reticulum, recruited by DNAJB9/ERdj4 to the luminal region of ERN1/IRE1, leading to disrupt the dimerization of ERN1/IRE1, thereby inactivating ERN1/IRE1. Also binds and inactivates EIF2AK3/PERK in unstressed cells. Accumulation of misfolded protein in the endoplasmic reticulum causes release of HSPA5/BiP from ERN1/IRE1 and EIF2AK3/PERK, allowing their homodimerization and subsequent activation. Plays an auxiliary role in post-translational transport of small presecretory proteins across endoplasmic reticulum (ER). May function as an allosteric modulator for SEC61 channel-forming translocon complex, likely cooperating with SEC62 to enable the productive insertion of these precursors into SEC61 channel. Appears to specifically regulate translocation of precursors having inhibitory residues in their mature region that weaken channel gating. May also play a role in apoptosis and cell proliferation. In Mus musculus (Mouse), this protein is Endoplasmic reticulum chaperone BiP.